Here is a 331-residue protein sequence, read N- to C-terminus: UBX domain-containing protein 2B (331 aa).

Disordered regions lie at residues 1-26 (MAEGGGPEPGEQERRSSGPRPPSARD) and 40-65 (KCKSSKSNRPKATVFKSPRTPPQRFY). An N-acetylalanine modification is found at A2. S56 carries the phosphoserine modification. Residue T59 is modified to Phosphothreonine. Position 66 is a phosphoserine (S66). Residues 141 to 206 (DVQILLKLWS…MEDHQDQEYI (66 aa)) form the SEP domain. S231, S234, and S235 each carry phosphoserine. The UBX domain occupies 252–329 (DSVPTTKIQI…DILNTVLLQQ (78 aa)).

The protein belongs to the NSFL1C family. In terms of assembly, interacts with VCP. Does not bind ubiquitin.

The protein localises to the nucleus. Its subcellular location is the cytoplasm. It is found in the cytosol. It localises to the endoplasmic reticulum. The protein resides in the golgi apparatus. The protein localises to the cytoskeleton. Its subcellular location is the microtubule organizing center. It is found in the centrosome. In terms of biological role, adapter protein required for Golgi and endoplasmic reticulum biogenesis. Involved in Golgi and endoplasmic reticulum maintenance during interphase and in their reassembly at the end of mitosis. The complex formed with VCP has membrane fusion activity; membrane fusion activity requires USO1-GOLGA2 tethering and BET1L. VCPIP1 is also required, but not its deubiquitinating activity. Together with NSFL1C/p47, regulates the centrosomal levels of kinase AURKA/Aurora A during mitotic progression by promoting AURKA removal from centrosomes in prophase. Also, regulates spindle orientation during mitosis. The chain is UBX domain-containing protein 2B (UBXN2B) from Homo sapiens (Human).